The chain runs to 285 residues: HTH-type transcriptional regulator MurR (285 aa).

The HTH rpiR-type domain maps to 1–77 (MLYLTKIRNA…MALIGEYSAS (77 aa)). The H-T-H motif DNA-binding region spans 37-56 (SRQMAKQLGISQSSIVKFAQ). In terms of domain architecture, SIS spans 128–268 (IIEVISKAPF…FVGLVQLNDV (141 aa)).

Homotetramer.

Its pathway is amino-sugar metabolism; N-acetylmuramate degradation [regulation]. In terms of biological role, represses the expression of the murPQ operon involved in the uptake and degradation of N-acetylmuramic acid (MurNAc). Binds to two adjacent inverted repeats within the operator region. MurNAc 6-phosphate, the substrate of MurQ, is the specific inducer that weakens binding of MurR to the operator. This Escherichia coli (strain ATCC 8739 / DSM 1576 / NBRC 3972 / NCIMB 8545 / WDCM 00012 / Crooks) protein is HTH-type transcriptional regulator MurR.